Reading from the N-terminus, the 436-residue chain is Cholecystokinin receptor type A (436 aa).

At 1 to 41 (MDVVDSLLMNGSNITPPCELGLENETLFCLDQPQPSKEWQS) the chain is on the extracellular side. 2 N-linked (GlcNAc...) asparagine glycosylation sites follow: Asn-10 and Asn-24. Cys-18 and Cys-29 are oxidised to a cystine. Residues 42–67 (AVQILLYSFIFLLSVLGNTLVITVLI) form a helical membrane-spanning segment. Residues 68 to 77 (RNKRMRTVTN) are Cytoplasmic-facing. A helical membrane pass occupies residues 78–104 (IFLLSLAVSDLMLCLFCMPFNLIPNLL). The Extracellular segment spans residues 105–115 (KDFIFGSAVCK). Residues Cys-114 and Cys-196 are joined by a disulfide bond. A helical membrane pass occupies residues 116–137 (TTTYFMGTSVSVSTFNLVAISL). Over 138–157 (ERYGAICRPLQSRVWQTKSH) the chain is Cytoplasmic. The chain crosses the membrane as a helical span at residues 158–178 (ALKVIAATWCLSFTIMTPYPI). The Extracellular portion of the chain corresponds to 179 to 210 (YSNLVPFTKNNNQTANMCRFLLPSDAMQQSWQ). N-linked (GlcNAc...) asparagine glycosylation is present at Asn-190. The chain crosses the membrane as a helical span at residues 211–234 (TFLLLILFLIPGVVMVVAYGLISL). Over 235-321 (ELYQGIKFDA…NLIAKKRVIR (87 aa)) the chain is Cytoplasmic. The interval 252–280 (EKRLSSGGGGGGGSSSSRYEDSDGCYLQK) is disordered. A helical transmembrane segment spans residues 322–342 (MLIVIVVLFFLCWMPIFSANA). Over 343-357 (WRAYDTVSAEKHLSG) the chain is Extracellular. A helical transmembrane segment spans residues 358-381 (TPISFILLLSYTSSCVNPIIYCFM). The Cytoplasmic portion of the chain corresponds to 382–436 (NKRFRLGFMATFPCCPNPGPTGVRGEVGEEEDGRTIRASLSRYSYSHMSTSAPPH). Cys-395 is lipidated: S-palmitoyl cysteine.

Belongs to the G-protein coupled receptor 1 family.

Its subcellular location is the cell membrane. In terms of biological role, receptor for cholecystokinin. Mediates pancreatic growth and enzyme secretion, smooth muscle contraction of the gall bladder and stomach. Has a 1000-fold higher affinity for CCK rather than for gastrin. It modulates feeding and dopamine-induced behavior in the central and peripheral nervous system. This receptor mediates its action by association with G proteins that activate a phosphatidylinositol-calcium second messenger system. This chain is Cholecystokinin receptor type A (Cckar), found in Mus musculus (Mouse).